Consider the following 217-residue polypeptide: MSFVPREAVEQAVKEALEISPKRNFKQSVDLIVVLRDIDLRSPQGRIREVVILPHPPKKHVRICVAADGDMAVKAKEVADRVLTREELQGLVGNRKAAKKIAEFCDWVIVKADLMPLVGRTLAPALGPRGKVPIPVPPNANIAEIVKTYRSAVMLRAKDQPQVMCRVGTEDMPVNEIVDNIFKVLSTLEGKLPNARHNIAKVIVKLTMGPPVEVKLR.

It belongs to the universal ribosomal protein uL1 family. As to quaternary structure, part of the 50S ribosomal subunit.

Its function is as follows. Binds directly to 23S rRNA. Probably involved in E site tRNA release. Functionally, protein L1 is also a translational repressor protein, it controls the translation of its operon by binding to its mRNA. The sequence is that of Large ribosomal subunit protein uL1 from Hyperthermus butylicus (strain DSM 5456 / JCM 9403 / PLM1-5).